The chain runs to 71 residues: Defensin 1 (71 aa).

An N-terminal signal peptide occupies residues 1 to 25 (KTVAGFCIFFLVLFLAQEGVVKTEA). 3 cysteine pairs are disulfide-bonded: C28-C71, C39-C60, and C45-C65.

It belongs to the DEFL family. As to quaternary structure, may form dimers. Post-translationally, not glycosylated. Contains 4 disulfide bonds. In terms of processing, met-61 and Met-63 might be oxidized in some molecules.

Probably has antifungal activity. The polypeptide is Defensin 1 (Arachis hypogaea (Peanut)).